The sequence spans 210 residues: HTH-type transcriptional regulator TtgR (210 aa).

An HTH tetR-type domain is found at 10 to 70; it reads QETRAQIIEA…ALLDSLHETH (61 aa). The H-T-H motif DNA-binding region spans 33 to 52; it reads TLADIAELAGVTRGAIYWHF.

Homodimer.

Represses expression from the ttgABC operon promoter and its own expression. Binds to a promoter region between the divergently transcribed ttgR and ttgABC genes/operons; in the presence of chloramphenicol or tetracycline this binding no longer occurs and ttgR and ttgABC are derepressed. This suggests that TtgR binds these antibiotics. This is HTH-type transcriptional regulator TtgR (ttgR) from Pseudomonas putida (strain DOT-T1E).